Consider the following 563-residue polypeptide: Germacrene C/D synthase (563 aa).

Residues 1–22 (MESCLSVSSAPPPKKNIQEPVR) form a disordered region. Residues Asp-315, Asp-319, and Glu-468 each coordinate Mg(2+). The DDXXD motif motif lies at 315–319 (DDTYD).

This sequence belongs to the terpene synthase family. Mg(2+) serves as cofactor. In terms of tissue distribution, predominantly expressed in root.

It carries out the reaction (2E,6E)-farnesyl diphosphate = germacrene C + diphosphate. It catalyses the reaction (2E,6E)-farnesyl diphosphate = (-)-germacrene D + diphosphate. Functionally, mediates formation of germacrene C and germacrene D using farnesyl diphosphate as substrate. Can also catalyze formation of trace of germacrene B. The polypeptide is Germacrene C/D synthase (TPS1) (Valeriana officinalis (Valerian)).